The sequence spans 296 residues: Thioredoxin-related transmembrane protein 2 (296 aa).

The N-terminal stretch at 1-48 (MAVLAPLIALVYSVPRLSRWLARPYYFLSALLSAAFLLVRKLPPVCES) is a signal peptide. Topologically, residues 49–102 (LPTQREDGNPCDFDWREVEILMFLSAIVMMKNRRSITVEQHVGNIFMFSKVANA) are extracellular. The helical transmembrane segment at 103-125 (ILFFRLDIRMGLLYITLCIVFLM) threads the bilayer. Over 126 to 296 (TCKPPLYMGP…VPDEESKKDK (171 aa)) the chain is Cytoplasmic. The 138-residue stretch at 132-269 (YMGPEYIKYF…LYQRAKKLSK (138 aa)) folds into the Thioredoxin domain. 2 positions are modified to phosphoserine: S211 and S243. The disordered stretch occupies residues 272-296 (DKIPEEQPVAAVPAAVPDEESKKDK). A compositionally biased stretch (low complexity) spans 277–287 (EQPVAAVPAAV). The short motif at 293–296 (KKDK) is the Di-lysine motif element.

In terms of assembly, monomer. Homodimer; disulfide-linked. Occurs in both reduced and oxidized monomeric form. Oxidative conditions increase homodimerization. Interacts with CANX. Interacts with ATP2A2.

The protein localises to the endoplasmic reticulum membrane. Its subcellular location is the mitochondrion membrane. Functionally, endoplasmic reticulum and mitochondria-associated protein that probably functions as a regulator of cellular redox state and thereby regulates protein post-translational modification, protein folding and mitochondrial activity. Indirectly regulates neuronal proliferation, migration, and organization in the developing brain. The chain is Thioredoxin-related transmembrane protein 2 (TMX2) from Bos taurus (Bovine).